Consider the following 270-residue polypeptide: tRNA pseudouridine synthase A (270 aa).

The active-site Nucleophile is Asp60. Residues 107–111 (FHARF) form an RNA binding region. Tyr118 is a binding site for substrate. An interaction with tRNA region spans residues 168–172 (QCQSR).

It belongs to the tRNA pseudouridine synthase TruA family. In terms of assembly, homodimer.

It carries out the reaction uridine(38/39/40) in tRNA = pseudouridine(38/39/40) in tRNA. Functionally, formation of pseudouridine at positions 38, 39 and 40 in the anticodon stem and loop of transfer RNAs. The chain is tRNA pseudouridine synthase A from Enterobacter sp. (strain 638).